A 410-amino-acid chain; its full sequence is 2-hydroxy-5-methyl-1-naphthoate 7-hydroxylase (410 aa).

Cys350 lines the heme pocket.

This sequence belongs to the cytochrome P450 family. Heme is required as a cofactor.

It carries out the reaction 2-hydroxy-5-methyl-1-naphthoate + 2 reduced [2Fe-2S]-[ferredoxin] + O2 + 2 H(+) = 2,7-dihydroxy-5-methyl-1-naphthoate + 2 oxidized [2Fe-2S]-[ferredoxin] + H2O. It functions in the pathway antibiotic biosynthesis. Functionally, involved in the biosynthesis of the naphthoic acid (NA) moiety in the chromophore of the enedyine antitumor antibiotic neocarzinostatin (NCS). Catalyzes the hydroxylation at C-7 position of 2-hydroxy-5-methyl-1-naphthoate to yield 2,7-dihydroxy-5-methyl-1-naphthoate. In Streptomyces carzinostaticus, this protein is 2-hydroxy-5-methyl-1-naphthoate 7-hydroxylase.